The following is a 291-amino-acid chain: Undecaprenyl-diphosphatase (291 aa).

8 helical membrane passes run 1–21, 48–68, 102–122, 126–146, 162–182, 203–223, 231–251, and 267–287; these read MFII…LTEF, SAFT…AWVF, LHVL…DDFI, LFSV…MIIA, ISYF…WPGF, SDFT…LSLL, IADI…GLIA, and FAIY…GFGI.

This sequence belongs to the UppP family.

It localises to the cell membrane. The catalysed reaction is di-trans,octa-cis-undecaprenyl diphosphate + H2O = di-trans,octa-cis-undecaprenyl phosphate + phosphate + H(+). Its function is as follows. Catalyzes the dephosphorylation of undecaprenyl diphosphate (UPP). Confers resistance to bacitracin. This Staphylococcus aureus (strain USA300) protein is Undecaprenyl-diphosphatase.